The sequence spans 321 residues: Protein FAM110C (321 aa).

Disordered regions lie at residues 1 to 84 (MRAL…APAP) and 111 to 203 (RGSG…SQSD). 2 stretches are compositionally biased toward basic and acidic residues: residues 15–46 (LLPRDPAATRDPDAARPARRSAVERLAADRAK) and 131–145 (GKDKAPVPRTGDEGK). A compositionally biased stretch (low complexity) spans 169–181 (APAARSAAPSSVP). The residue at position 241 (Ser241) is a Phosphoserine.

Belongs to the FAM110 family. In terms of assembly, interacts with AKT1; the interaction is transient and follows AKT1 activation. Interacts with PPP2CA and alpha-tubulin. Detected in stomach, thyroid, trachea, adrenal gland and testis, and at low levels in prostate, ovary, intestine, colon, spinal cord and lymph node.

The protein resides in the cytoplasm. The protein localises to the cytoskeleton. Its subcellular location is the microtubule organizing center. It localises to the centrosome. It is found in the spindle pole. The protein resides in the nucleus. In terms of biological role, may play a role in microtubule organization. May play a role in cell spreading and cell migration of epithelial cells; the function may involve the AKT1 signaling pathway. This Homo sapiens (Human) protein is Protein FAM110C (FAM110C).